The following is a 105-amino-acid chain: Large ribosomal subunit protein uL24 (105 aa).

This sequence belongs to the universal ribosomal protein uL24 family. As to quaternary structure, part of the 50S ribosomal subunit.

Functionally, one of two assembly initiator proteins, it binds directly to the 5'-end of the 23S rRNA, where it nucleates assembly of the 50S subunit. One of the proteins that surrounds the polypeptide exit tunnel on the outside of the subunit. The sequence is that of Large ribosomal subunit protein uL24 from Xanthomonas campestris pv. campestris (strain 8004).